A 398-amino-acid polypeptide reads, in one-letter code: S-adenosylmethionine synthase (398 aa).

His17 contacts ATP. Asp19 is a binding site for Mg(2+). Glu45 provides a ligand contact to K(+). L-methionine contacts are provided by Glu58 and Gln101. A flexible loop region spans residues 101–111; it reads QSPDIAQGVDK. Residues 176–178, 243–244, Asp252, 258–259, and Lys279 contribute to the ATP site; these read DGK, RF, and RK. Residue Asp252 coordinates L-methionine. Lys283 contacts L-methionine.

This sequence belongs to the AdoMet synthase family. As to quaternary structure, homotetramer; dimer of dimers. Mg(2+) serves as cofactor. It depends on K(+) as a cofactor.

The protein localises to the cytoplasm. It carries out the reaction L-methionine + ATP + H2O = S-adenosyl-L-methionine + phosphate + diphosphate. Its pathway is amino-acid biosynthesis; S-adenosyl-L-methionine biosynthesis; S-adenosyl-L-methionine from L-methionine: step 1/1. Functionally, catalyzes the formation of S-adenosylmethionine (AdoMet) from methionine and ATP. The overall synthetic reaction is composed of two sequential steps, AdoMet formation and the subsequent tripolyphosphate hydrolysis which occurs prior to release of AdoMet from the enzyme. This is S-adenosylmethionine synthase from Staphylococcus haemolyticus (strain JCSC1435).